The following is a 324-amino-acid chain: MNILTDFRTHRPATLADAVNALAAEATLPLGAGTDLLPNLRRGLGHPAALVDLTGIDGLATISTLADGSLRIGAGATLEAIAEHDAIRTTWPALAQAAESVAGPTHRAAATLGGNLCQDTRCTFYNQSEWWRSGNGYCLKYKGDKCHVIVKSDRCYATYHGDVAPALMVLDARAEIVGPAGKRTVPVAQLFRESGAEHLTLEKGELLAAIEVPPTGAWSAAYSKVRIRDAVDFPLAGVAAALQRDGDRIAGLRVAITGSNSAPLMVPVDALLGGNWDDAAAETLAQLVRKTSNVLRTTITGVKYRRRVLLAISRKVVDQLWEAR.

The FAD-binding PCMH-type domain occupies 2-217 (NILTDFRTHR…AAIEVPPTGA (216 aa)). FAD contacts are provided by residues 29 to 36 (PLGAGTDL), T111, N115, and Q118. [4Fe-4S] cluster contacts are provided by C122, C138, C146, and C155. Residues D162 and K224 each coordinate FAD.

In terms of assembly, heterohexamer of two alpha, two beta and two gamma subunits. Requires FAD as cofactor. The cofactor is [4Fe-4S] cluster.

It carries out the reaction oxidized 2[4Fe-4S]-[ferredoxin] + benzoyl-CoA + H2O = 4-hydroxybenzoyl-CoA + reduced 2[4Fe-4S]-[ferredoxin] + 2 H(+). With respect to regulation, inactivated by low concentrations of cyanide in vitro. Functionally, component of a complex that catalyzes the reductive dehydroxylation of 4-hydroxybenzoyl-CoA to benzoyl-CoA. Reaction is not reversible. Is a key enzyme in the anaerobic degradation of phenolic compounds. This Thauera aromatica protein is 4-hydroxybenzoyl-CoA reductase subunit beta (hcrB).